A 420-amino-acid polypeptide reads, in one-letter code: L-rhamnose isomerase (420 aa).

Mn(2+) is bound by residues His-264, Asp-296, and Asp-298.

The protein belongs to the rhamnose isomerase family. The cofactor is Mn(2+).

It localises to the cytoplasm. It catalyses the reaction L-rhamnopyranose = L-rhamnulose. It functions in the pathway carbohydrate degradation; L-rhamnose degradation; glycerone phosphate from L-rhamnose: step 1/3. Its function is as follows. Catalyzes the interconversion of L-rhamnose and L-rhamnulose. The polypeptide is L-rhamnose isomerase (Listeria monocytogenes serovar 1/2a (strain ATCC BAA-679 / EGD-e)).